A 120-amino-acid polypeptide reads, in one-letter code: Large ribosomal subunit protein bL19 (120 aa).

Belongs to the bacterial ribosomal protein bL19 family.

This protein is located at the 30S-50S ribosomal subunit interface and may play a role in the structure and function of the aminoacyl-tRNA binding site. The protein is Large ribosomal subunit protein bL19 of Crocosphaera subtropica (strain ATCC 51142 / BH68) (Cyanothece sp. (strain ATCC 51142)).